The primary structure comprises 293 residues: Protein YIF1A (293 aa).

Residues methionine 1–aspartate 27 form a disordered region. Alanine 2 carries the N-acetylalanine modification. The Cytoplasmic portion of the chain corresponds to alanine 2–aspartate 138. Serine 12 carries the post-translational modification Phosphoserine. The helical transmembrane segment at leucine 139 to isoleucine 159 threads the bilayer. Residues glutamine 160 to threonine 174 are Lumenal-facing. A helical transmembrane segment spans residues alanine 175 to valine 195. Over arginine 196 to histidine 203 the chain is Cytoplasmic. A helical membrane pass occupies residues leucine 204–glycine 226. The Lumenal segment spans residues serine 227–glycine 229. A helical transmembrane segment spans residues tyrosine 230 to leucine 249. Topologically, residues arginine 250–tyrosine 271 are cytoplasmic. Residues leucine 272–valine 292 traverse the membrane as a helical segment.

It belongs to the YIF1 family. As to quaternary structure, interacts with YIPF5.

The protein resides in the endoplasmic reticulum membrane. It is found in the golgi apparatus membrane. The protein localises to the endoplasmic reticulum-Golgi intermediate compartment membrane. Functionally, possible role in transport between endoplasmic reticulum and Golgi. This is Protein YIF1A (Yif1a) from Mus musculus (Mouse).